Here is an 858-residue protein sequence, read N- to C-terminus: Zinc finger protein ZXDC (858 aa).

3 disordered regions span residues methionine 1–serine 73, aspartate 85–alanine 108, and alanine 142–alanine 175. Pro residues predominate over residues alanine 59–glutamate 68. Residues alanine 142 to proline 152 are compositionally biased toward low complexity. 10 C2H2-type zinc fingers span residues tyrosine 176–histidine 200, phenylalanine 209–histidine 233, phenylalanine 239–histidine 263, phenylalanine 269–histidine 291, tyrosine 298–histidine 322, phenylalanine 329–histidine 353, phenylalanine 359–histidine 383, phenylalanine 389–histidine 413, phenylalanine 419–histidine 443, and serine 452–histidine 477. Polar residues predominate over residues aspartate 624–leucine 634. Residues aspartate 624–serine 652 form a disordered region. Residues threonine 635–glycine 651 are compositionally biased toward low complexity. Lysine 661 participates in a covalent cross-link: Glycyl lysine isopeptide (Lys-Gly) (interchain with G-Cter in SUMO). 2 disordered regions span residues aspartate 671–glycine 714 and valine 727–glycine 751. The span at glycine 681–glutamate 692 shows a compositional bias: polar residues.

It belongs to the ZXD family. Self-associates. Interacts with ZXDB and CIITA. Post-translationally, sumoylated at Lys-661 with SUMO1, SUMO2 and SUMO3; sumoylation enhances the activity of the transcriptional activation domain.

It localises to the nucleus. Cooperates with CIITA to promote transcription of MHC class I and MHC class II genes. The polypeptide is Zinc finger protein ZXDC (Zxdc) (Mus musculus (Mouse)).